The following is a 286-amino-acid chain: MILFSKMHGLGNDYVVIDESAQECIPEDKKPEFVREVCTRGFSVGADGVIFVQPASGEGDIRFRIFNADGSEAEMCGNGIRCFSKFVYDNAIVRKRRLEVETLAGIKTVELEVEDGAVVSSRVDMGTATFKTDQIPMDVEEYEFIDRFLPVEGEDIKLTALSVGNPHAIIFVDDAEGVDLDRLGPAIENHPLFPERINVHFVEVVSPSEIIMVTWERGAGPTMACGTGATASVIAGVKLEKLDDSVLVHLPGGELKIDVYQDGTELGAYMEGDAVMVFDGILLRDP.

Residues Asn-12 and Asn-67 each coordinate substrate. Catalysis depends on Cys-76, which acts as the Proton donor. Substrate contacts are provided by residues 77 to 78, Asn-165, Asn-198, and 216 to 217; these read GN and ER. Cys-225 (proton acceptor) is an active-site residue. A substrate-binding site is contributed by 226–227; that stretch reads GT.

It belongs to the diaminopimelate epimerase family. Homodimer.

It localises to the cytoplasm. The enzyme catalyses (2S,6S)-2,6-diaminopimelate = meso-2,6-diaminopimelate. It participates in amino-acid biosynthesis; L-lysine biosynthesis via DAP pathway; DL-2,6-diaminopimelate from LL-2,6-diaminopimelate: step 1/1. Its function is as follows. Catalyzes the stereoinversion of LL-2,6-diaminopimelate (L,L-DAP) to meso-diaminopimelate (meso-DAP), a precursor of L-lysine. The chain is Diaminopimelate epimerase from Methanothermobacter thermautotrophicus (strain ATCC 29096 / DSM 1053 / JCM 10044 / NBRC 100330 / Delta H) (Methanobacterium thermoautotrophicum).